The following is a 165-amino-acid chain: Small ribosomal subunit protein uS5 (165 aa).

Positions 13-76 constitute an S5 DRBM domain; sequence LEEKVLVVNR…EAAKKNLMKI (64 aa).

It belongs to the universal ribosomal protein uS5 family. Part of the 30S ribosomal subunit. Contacts proteins S4 and S8.

Its function is as follows. With S4 and S12 plays an important role in translational accuracy. Functionally, located at the back of the 30S subunit body where it stabilizes the conformation of the head with respect to the body. The polypeptide is Small ribosomal subunit protein uS5 (Chlamydia pneumoniae (Chlamydophila pneumoniae)).